Consider the following 496-residue polypeptide: Hemophilin secretion modulator (496 aa).

The signal sequence occupies residues 1-19; sequence MKRTLLCCLTLLSCPFLYA. A run of 14 beta stranded transmembrane segments spans residues 198–208, 253–263, 268–277, 291–301, 305–315, 327–337, 341–351, 365–374, 380–389, 403–413, 418–427, 446–455, 462–472, and 486–495; these read WQGSVSAGYTY, DYEASLIKRYA, HGVALRALAF, TININAGYSYF, NQIGVSPLFEH, WGARAEWMHFI, KAFKLEAESKD, SSAFATFWKI, TFFGGLDVLD, QGVRLGLSKSW, NTTLLSSYRW, QNHTFVVQMP, MTPNLTYRYNH, and HNISFKLEHR.

This sequence belongs to the Slam family.

It is found in the cell outer membrane. Its function is as follows. Part of a high affinity heme acquisition system. Mediates the secretion of the hemophilin HphA across the outer membrane into the extracellular environment. Plays a supporting role for full virulence. This Acinetobacter baumannii protein is Hemophilin secretion modulator.